Here is a 305-residue protein sequence, read N- to C-terminus: Serine/threonine-protein phosphatase PP-X isozyme 1 (305 aa).

Residues D51, H53, D79, and N111 each contribute to the Mn(2+) site. Catalysis depends on H112, which acts as the Proton donor. Residues H161 and H236 each coordinate Mn(2+).

This sequence belongs to the PPP phosphatase family. PP-4 (PP-X) subfamily. Interacts with TAP46. Requires Mn(2+) as cofactor. In terms of tissue distribution, ubiquitous, mostly expressed in root mersitems, flowers, and vascular tissues.

The protein resides in the plastid stroma. The enzyme catalyses O-phospho-L-seryl-[protein] + H2O = L-seryl-[protein] + phosphate. It carries out the reaction O-phospho-L-threonyl-[protein] + H2O = L-threonyl-[protein] + phosphate. The protein is Serine/threonine-protein phosphatase PP-X isozyme 1 (PPX1) of Arabidopsis thaliana (Mouse-ear cress).